Here is a 200-residue protein sequence, read N- to C-terminus: Recombination protein RecR (200 aa).

The C4-type zinc finger occupies C57–C72. In terms of domain architecture, Toprim spans R81 to P176.

It belongs to the RecR family.

Its function is as follows. May play a role in DNA repair. It seems to be involved in an RecBC-independent recombinational process of DNA repair. It may act with RecF and RecO. The polypeptide is Recombination protein RecR (Mannheimia succiniciproducens (strain KCTC 0769BP / MBEL55E)).